The sequence spans 403 residues: MDSESVVAADGADCAIANGEVTMEGDSSNGNGGTSENLECCSTQHPMEASEGTQNEQVDDSKQMRGQKVQGRVKHEKTSGGKNIPSVLVKKKKDGKVVASNGSVAPNVKPVKSPKSKSLNGREAHVTKHGNHDSLPAEGTRDKPKLRETRKQVNDTSEDDTQYPKEDDGKPRRASALPNYGFSFRCDQRAEKRREFYSKLEEKIHAKEEEKNTVQAKSKETQEAELKMLRKSLNFKATPMPTFYQEPQLPKTELKKIAITRPKSPKLGRKKTNSRADSEEAITIQTPRFGRLSLDEKTPKDNPVVEGSVPGETKKPPVRKSLPRLPSEKTNLSNGKVAPAKAVTASTKAKSERKKPDKDVDDLSQSSPVDDNADPEDSQEQAPRVNEDRNESHMVVEVVAVEP.

Disordered stretches follow at residues 1-179 (MDSE…ALPN) and 254-403 (LKKI…AVEP). Residues 25–56 (GDSSNGNGGTSENLECCSTQHPMEASEGTQNE) show a composition bias toward polar residues. Residues 103–118 (SVAPNVKPVKSPKSKS) are compositionally biased toward low complexity. Serine 113 is subject to Phosphoserine. Basic and acidic residues-rich tracts occupy residues 120 to 132 (NGREAHVTKHGNH), 139 to 153 (GTRDKPKLRETRKQV), and 162 to 171 (QYPKEDDGKP). Residues 263–273 (KSPKLGRKKTN) are compositionally biased toward basic residues. A compositionally biased stretch (low complexity) spans 336-348 (KVAPAKAVTASTK). Positions 385 to 394 (VNEDRNESHM) are enriched in basic and acidic residues.

Belongs to the TPX2 family. Expressed in seedlings.

The protein resides in the cytoplasm. It is found in the cytoskeleton. Its function is as follows. Microtubule-associated protein (MAP) that regulates the orientation of interphase cortical microtubules. This chain is Protein WVD2-like 6, found in Arabidopsis thaliana (Mouse-ear cress).